The primary structure comprises 135 residues: MRGDRSDRLMKKEIFNLNRHLPSRRKTLEELLREDRPHVTGADGTRHRFKWAELEDLRGMLTEDEARRLRLPIYIEIESETSGARIAGDIEVKVVSEVLERDDEGDEIYIYRPEMRVLRARFPTVTQYMFLVREL.

Belongs to the UPF0216 family.

This Methanothermobacter thermautotrophicus (strain ATCC 29096 / DSM 1053 / JCM 10044 / NBRC 100330 / Delta H) (Methanobacterium thermoautotrophicum) protein is UPF0216 protein MTH_949.